Reading from the N-terminus, the 241-residue chain is Large ribosomal subunit protein uL1 (241 aa).

Belongs to the universal ribosomal protein uL1 family. In terms of assembly, part of the 50S ribosomal subunit.

Binds directly to 23S rRNA. The L1 stalk is quite mobile in the ribosome, and is involved in E site tRNA release. Functionally, protein L1 is also a translational repressor protein, it controls the translation of the L11 operon by binding to its mRNA. The protein is Large ribosomal subunit protein uL1 of Streptomyces avermitilis (strain ATCC 31267 / DSM 46492 / JCM 5070 / NBRC 14893 / NCIMB 12804 / NRRL 8165 / MA-4680).